Consider the following 200-residue polypeptide: Glycerol-3-phosphate acyltransferase (200 aa).

The next 5 helical transmembrane spans lie at 2–22 (FNISAVAVSYLIGSLSFAVIV), 51–71 (KAAALTLLGDAAKGLVAVLLA), 84–104 (AIAAVALAALVGHMWPVFFGF), 114–134 (LGVLLALSPATALVCALIWLV), and 159–179 (FFMPHTSWIWATLLIALLVLF).

The protein belongs to the PlsY family. As to quaternary structure, probably interacts with PlsX.

It is found in the cell inner membrane. The catalysed reaction is an acyl phosphate + sn-glycerol 3-phosphate = a 1-acyl-sn-glycero-3-phosphate + phosphate. The protein operates within lipid metabolism; phospholipid metabolism. In terms of biological role, catalyzes the transfer of an acyl group from acyl-phosphate (acyl-PO(4)) to glycerol-3-phosphate (G3P) to form lysophosphatidic acid (LPA). This enzyme utilizes acyl-phosphate as fatty acyl donor, but not acyl-CoA or acyl-ACP. This chain is Glycerol-3-phosphate acyltransferase, found in Neisseria meningitidis serogroup C (strain 053442).